The following is a 170-amino-acid chain: Crossover junction endodeoxyribonuclease RuvC (170 aa).

Active-site residues include Asp-11, Glu-71, and Asp-143. Positions 11, 71, and 143 each coordinate Mg(2+).

This sequence belongs to the RuvC family. Homodimer which binds Holliday junction (HJ) DNA. The HJ becomes 2-fold symmetrical on binding to RuvC with unstacked arms; it has a different conformation from HJ DNA in complex with RuvA. In the full resolvosome a probable DNA-RuvA(4)-RuvB(12)-RuvC(2) complex forms which resolves the HJ. Requires Mg(2+) as cofactor.

It localises to the cytoplasm. It carries out the reaction Endonucleolytic cleavage at a junction such as a reciprocal single-stranded crossover between two homologous DNA duplexes (Holliday junction).. Functionally, the RuvA-RuvB-RuvC complex processes Holliday junction (HJ) DNA during genetic recombination and DNA repair. Endonuclease that resolves HJ intermediates. Cleaves cruciform DNA by making single-stranded nicks across the HJ at symmetrical positions within the homologous arms, yielding a 5'-phosphate and a 3'-hydroxyl group; requires a central core of homology in the junction. The consensus cleavage sequence is 5'-(A/T)TT(C/G)-3'. Cleavage occurs on the 3'-side of the TT dinucleotide at the point of strand exchange. HJ branch migration catalyzed by RuvA-RuvB allows RuvC to scan DNA until it finds its consensus sequence, where it cleaves and resolves the cruciform DNA. The protein is Crossover junction endodeoxyribonuclease RuvC of Sinorhizobium fredii (strain NBRC 101917 / NGR234).